The chain runs to 68 residues: Large ribosomal subunit protein bL31 (68 aa).

Residues Cys16, Cys18, Cys36, and Cys39 each contribute to the Zn(2+) site.

This sequence belongs to the bacterial ribosomal protein bL31 family. Type A subfamily. Part of the 50S ribosomal subunit. Zn(2+) serves as cofactor.

In terms of biological role, binds the 23S rRNA. The sequence is that of Large ribosomal subunit protein bL31 from Dictyoglomus thermophilum (strain ATCC 35947 / DSM 3960 / H-6-12).